A 206-amino-acid polypeptide reads, in one-letter code: Putative 3-methyladenine DNA glycosylase (206 aa).

It belongs to the DNA glycosylase MPG family.

The protein is Putative 3-methyladenine DNA glycosylase of Staphylococcus carnosus (strain TM300).